Here is a 281-residue protein sequence, read N- to C-terminus: Ribosomal protein L11 methyltransferase (281 aa).

S-adenosyl-L-methionine-binding residues include threonine 133, glycine 154, aspartate 175, and asparagine 216.

The protein belongs to the methyltransferase superfamily. PrmA family.

The protein resides in the cytoplasm. The catalysed reaction is L-lysyl-[protein] + 3 S-adenosyl-L-methionine = N(6),N(6),N(6)-trimethyl-L-lysyl-[protein] + 3 S-adenosyl-L-homocysteine + 3 H(+). In terms of biological role, methylates ribosomal protein L11. This chain is Ribosomal protein L11 methyltransferase, found in Campylobacter jejuni subsp. jejuni serotype O:23/36 (strain 81-176).